The chain runs to 51 residues: Cytoplasmic FMR1-interacting protein 1 (51 aa).

This sequence belongs to the CYFIP family. As to quaternary structure, component of the WAVE1 complex composed of ABI2, CYFIP1 or CYFIP2, BRK1, NCKAP1 and WASF1/WAVE1. Within the complex, a heterodimer containing NCKAP1 and CYFIP1 interacts with a heterotrimer formed by WAVE1, ABI2 and BRK1. Component of the CYFIP1-EIF4E-FMR1 complex which is composed of CYFIP, EIF4E and FMR1. Interacts with FMR1 but does not bind to related proteins FXR1 or FXR2. Interaction with EIF4E stimulates FMR1 binding. Component of the WAVE2 complex composed of ABI1, CYFIP1/SRA1, NCKAP1/NAP1 (NCKAP1l/HEM1 in hematopoietic cells) and WASF2/WAVE2. Interacts with the active GTP-bound form of RAC1. Interacts through its C-terminus with the C-terminus of DPYSL2/CRMP2 which is necessary for DPYSL2-induced axon outgrowth. Interacts with NYAP1, NYAP2 and MYO16. Interacts with TMEM108 (via N-terminus); the interaction associates TMEM108 with the WAVE1 complex.

The protein resides in the cytoplasm. Its subcellular location is the perinuclear region. It is found in the cell projection. It localises to the lamellipodium. The protein localises to the ruffle. The protein resides in the synapse. Its subcellular location is the synaptosome. Functionally, component of the CYFIP1-EIF4E-FMR1 complex which binds to the mRNA cap and mediates translational repression. In the CYFIP1-EIF4E-FMR1 complex this subunit is an adapter between EIF4E and FMR1. Promotes the translation repression activity of FMR1 in brain probably by mediating its association with EIF4E and mRNA. Regulates formation of membrane ruffles and lamellipodia. Plays a role in axon outgrowth. Binds to F-actin but not to RNA. Part of the WAVE complex that regulates actin filament reorganization via its interaction with the Arp2/3 complex. Actin remodeling activity is regulated by RAC1. Regulator of epithelial morphogenesis. As component of the WAVE1 complex, required for BDNF-NTRK2 endocytic trafficking and signaling from early endosomes. This chain is Cytoplasmic FMR1-interacting protein 1, found in Bos taurus (Bovine).